The following is a 277-amino-acid chain: Carbonyl reductase [NADPH] 3 (277 aa).

N-acetylserine is present on S2. NADP(+)-binding positions include 10–34 (VTGA…GDVV), 38–42 (RDEAR), 63–64 (DI), and N90. At S30 the chain carries Phosphoserine. Substrate is bound at residue S140. Y194 serves as the catalytic Proton acceptor. 194–198 (YGVSK) contacts NADP(+).

Belongs to the short-chain dehydrogenases/reductases (SDR) family.

The protein localises to the cytoplasm. It carries out the reaction a secondary alcohol + NADP(+) = a ketone + NADPH + H(+). The catalysed reaction is a quinone + NADPH + H(+) = a quinol + NADP(+). In terms of biological role, catalyzes the NADPH-dependent reduction of carbonyl compounds to their corresponding alcohols. Has low NADPH-dependent oxidoreductase activity. Acts on several orthoquinones, as well as on non-quinone compounds, such as isatin or on the anticancer drug oracin. Best substrates for CBR3 is 1,2- naphthoquinone, hence could play a role in protection against cytotoxicity of exogenous quinones. Exerts activity toward ortho-quinones but not paraquinones. No endogenous substrate for CBR3 except isatin has been identified. This Rattus norvegicus (Rat) protein is Carbonyl reductase [NADPH] 3.